The primary structure comprises 610 residues: WD repeat-containing protein 46 (610 aa).

The interval 1 to 103 (METAPKPGKD…TQDPFPGPAP (103 aa)) is disordered. Over residues 7-19 (PGKDVPPKKDKLQ) the composition is skewed to basic and acidic residues. Ser-41 bears the Phosphoserine mark. Residues 65-77 (KKSRISKKPQVPK) show a composition bias toward basic residues. WD repeat units lie at residues 193–234 (LRQF…CEIN), 235–272 (VMEA…LHCI), 274–312 (RCDR…IVAA), 315–354 (ARAG…PLAK), 357–396 (CHRG…QPLS), and 399–436 (TLPH…SPPS). The segment at 538–610 (ERLGYDPQAK…RPSALDRFVR (73 aa)) is disordered. A compositionally biased stretch (basic and acidic residues) spans 572 to 582 (VMDEEHRDKVR).

In terms of assembly, part of the small subunit (SSU) processome, composed of more than 70 proteins and the RNA chaperone small nucleolar RNA (snoRNA) U3. Interacts with DDX21, NCL, NOP2 and EBNA1BP2.

It is found in the nucleus. The protein localises to the nucleolus. Its function is as follows. Scaffold component of the nucleolar structure. Required for localization of DDX21 and NCL to the granular compartment of the nucleolus. Part of the small subunit (SSU) processome, first precursor of the small eukaryotic ribosomal subunit. During the assembly of the SSU processome in the nucleolus, many ribosome biogenesis factors, an RNA chaperone and ribosomal proteins associate with the nascent pre-rRNA and work in concert to generate RNA folding, modifications, rearrangements and cleavage as well as targeted degradation of pre-ribosomal RNA by the RNA exosome. The polypeptide is WD repeat-containing protein 46 (WDR46) (Homo sapiens (Human)).